The chain runs to 219 residues: Protein-L-isoaspartate O-methyltransferase 2 (219 aa).

Residue Ser-60 is part of the active site.

The protein belongs to the methyltransferase superfamily. L-isoaspartyl/D-aspartyl protein methyltransferase family.

It localises to the cytoplasm. It catalyses the reaction [protein]-L-isoaspartate + S-adenosyl-L-methionine = [protein]-L-isoaspartate alpha-methyl ester + S-adenosyl-L-homocysteine. Functionally, catalyzes the methyl esterification of L-isoaspartyl residues in peptides and proteins that result from spontaneous decomposition of normal L-aspartyl and L-asparaginyl residues. It plays a role in the repair and/or degradation of damaged proteins. The protein is Protein-L-isoaspartate O-methyltransferase 2 (pcm2) of Archaeoglobus fulgidus (strain ATCC 49558 / DSM 4304 / JCM 9628 / NBRC 100126 / VC-16).